The sequence spans 321 residues: Cytochrome c biogenesis protein CcsA (321 aa).

Helical transmembrane passes span 9 to 29 (ILTH…LMTL), 44 to 64 (GLIA…IYSG), 71 to 91 (LYES…VPYF), 97 to 117 (LLST…TSGL), 143 to 163 (MILS…LLVI), 227 to 247 (VISL…VWAN), 261 to 275 (TWAF…IYLH), and 288 to 308 (AIVA…VNLL).

The protein belongs to the CcmF/CycK/Ccl1/NrfE/CcsA family. As to quaternary structure, may interact with Ccs1.

It is found in the plastid. It localises to the chloroplast thylakoid membrane. Required during biogenesis of c-type cytochromes (cytochrome c6 and cytochrome f) at the step of heme attachment. In Nandina domestica (Heavenly bamboo), this protein is Cytochrome c biogenesis protein CcsA.